The chain runs to 425 residues: Enolase (425 aa).

Q162 provides a ligand contact to (2R)-2-phosphoglycerate. E204 functions as the Proton donor in the catalytic mechanism. Residues D241, E282, and D309 each contribute to the Mg(2+) site. K334, R363, S364, and K385 together coordinate (2R)-2-phosphoglycerate. Residue K334 is the Proton acceptor of the active site.

This sequence belongs to the enolase family. Mg(2+) serves as cofactor.

It is found in the cytoplasm. It localises to the secreted. The protein localises to the cell surface. It carries out the reaction (2R)-2-phosphoglycerate = phosphoenolpyruvate + H2O. The protein operates within carbohydrate degradation; glycolysis; pyruvate from D-glyceraldehyde 3-phosphate: step 4/5. Catalyzes the reversible conversion of 2-phosphoglycerate (2-PG) into phosphoenolpyruvate (PEP). It is essential for the degradation of carbohydrates via glycolysis. In Micrococcus luteus (strain ATCC 4698 / DSM 20030 / JCM 1464 / CCM 169 / CCUG 5858 / IAM 1056 / NBRC 3333 / NCIMB 9278 / NCTC 2665 / VKM Ac-2230) (Micrococcus lysodeikticus), this protein is Enolase.